The sequence spans 410 residues: Mitochondrial potassium channel (410 aa).

The N-terminal 35 residues, 1 to 35, are a transit peptide targeting the mitochondrion; it reads MTGCSPVFTMQQVVGVSHRLVWRTFRGTDLLMTRT. Residues 36–201 lie on the Mitochondrial matrix side of the membrane; the sequence is LCSPGPSRPG…KERTRAERTK (166 aa). The stretch at 116 to 143 forms a coiled coil; it reads VREAREDLEAQQTKLKEVRDRLDRVSRE. The helical transmembrane segment at 202–222 threads the bilayer; the sequence is NWSLIGSVLGALIGVAGSTYV. The Mitochondrial intermembrane portion of the chain corresponds to 223-385; sequence NRVRLQELKA…RLEAQANRNA (163 aa). The interval 276–296 is disordered; sequence GQDQGSGSPTGPSSPRGKDID. The span at 280-290 shows a compositional bias: low complexity; the sequence is GSGSPTGPSSP. A helical transmembrane segment spans residues 386-406; sequence ISSTLVTCVTFMATLPLLYML. The Mitochondrial matrix segment spans residues 407-410; the sequence is FKTS.

As to quaternary structure, the mitochondrial potassium channel (mitoK(ATP)) forms a heteromultimer.

The protein localises to the mitochondrion inner membrane. The catalysed reaction is K(+)(in) = K(+)(out). With respect to regulation, channel activity inhibited by ATP via ABCB8/MITOSUR subunit. Functionally, pore-forming subunit of the mitochondrial ATP-gated potassium channel (mitoK(ATP)). Together with ATP-binding subunit ABCB8/MITOSUR of the mitoK(ATP) channel, mediates ATP-dependent K(+) currents across the mitochondrial inner membrane. An increase in ATP intracellular levels closes the channel, inhibiting K(+) transport, whereas a decrease in ATP levels enhances K(+) uptake in the mitochondrial matrix. May contribute to the homeostatic control of cellular metabolism under stress conditions by regulating the mitochondrial matrix volume. This Rattus norvegicus (Rat) protein is Mitochondrial potassium channel.